The primary structure comprises 372 residues: tRNA-specific 2-thiouridylase MnmA (372 aa).

ATP-binding positions include 16–23 (GMSGGVDS) and M42. The tract at residues 102-104 (NPD) is interaction with target base in tRNA. C107 serves as the catalytic Nucleophile. A disulfide bridge connects residues C107 and C205. G132 lines the ATP pocket. An interaction with tRNA region spans residues 155–157 (KDQ). The Cysteine persulfide intermediate role is filled by C205. Positions 317 to 318 (RY) are interaction with tRNA.

Belongs to the MnmA/TRMU family.

Its subcellular location is the cytoplasm. The catalysed reaction is S-sulfanyl-L-cysteinyl-[protein] + uridine(34) in tRNA + AH2 + ATP = 2-thiouridine(34) in tRNA + L-cysteinyl-[protein] + A + AMP + diphosphate + H(+). In terms of biological role, catalyzes the 2-thiolation of uridine at the wobble position (U34) of tRNA, leading to the formation of s(2)U34. This chain is tRNA-specific 2-thiouridylase MnmA, found in Shewanella baltica (strain OS223).